The primary structure comprises 208 residues: Redox-sensing transcriptional repressor Rex (208 aa).

Residues 18 to 57 constitute a DNA-binding region (H-T-H motif); it reads IYYRYFKLLETDGIERIKSEQLAKLVAIPSATIRRDFSYI. 92–97 contributes to the NAD(+) binding site; that stretch reads GVGNLG.

It belongs to the transcriptional regulatory Rex family. Homodimer.

Its subcellular location is the cytoplasm. Functionally, modulates transcription in response to changes in cellular NADH/NAD(+) redox state. The protein is Redox-sensing transcriptional repressor Rex of Latilactobacillus sakei subsp. sakei (strain 23K) (Lactobacillus sakei subsp. sakei).